Consider the following 88-residue polypeptide: Small ribosomal subunit protein uS15c (88 aa).

This sequence belongs to the universal ribosomal protein uS15 family. In terms of assembly, part of the 30S ribosomal subunit.

It localises to the plastid. It is found in the chloroplast. This is Small ribosomal subunit protein uS15c (rps15) from Pinus thunbergii (Japanese black pine).